The chain runs to 170 residues: uncharacterized protein (170 aa).

This is an uncharacterized protein from Homo sapiens (Human).